A 338-amino-acid chain; its full sequence is Acyl-CoA:acyl-CoA alkyltransferase (338 aa).

Mn(2+) is bound by residues His-18 and Asp-56. Catalysis depends on Glu-97, which acts as the Proton acceptor. Residue Cys-123 is the Acyl-thioester intermediate of the active site.

Belongs to the thiolase-like superfamily. OleA family. As to quaternary structure, homodimer. Weakly associates with the OleBCD complex.

The protein localises to the cytoplasm. The enzyme catalyses a 1,2-saturated acyl-CoA + an acyl-CoA + H2O = an (R)-2-alkyl-3-oxoalkanoate + 2 CoA + H(+). With respect to regulation, inhibited by cerulenin. Its function is as follows. Involved in olefin biosynthesis. Catalyzes a non-decarboxylative head-to-head Claisen condensation of two acyl-CoA molecules, generating an (R)-2-alkyl-3-oxoalkanoate. Is active with fatty acyl-CoA substrates that ranged from C(8) to C(16) in length, and is the most active with palmitoyl-CoA and myristoyl-CoA. This is Acyl-CoA:acyl-CoA alkyltransferase from Xanthomonas campestris pv. campestris (strain ATCC 33913 / DSM 3586 / NCPPB 528 / LMG 568 / P 25).